The sequence spans 429 residues: ATP-dependent Clp protease ATP-binding subunit ClpX (429 aa).

The region spanning 1–54 (MARSKSQKIEGCSFCGRTRAEAEGKIISAKSVAICFECSKICHNLFKEESDKPA) is the ClpX-type ZB domain. Cys-12, Cys-15, Cys-35, and Cys-38 together coordinate Zn(2+). Position 119–126 (119–126 (PTGSGKTL)) interacts with ATP.

The protein belongs to the ClpX chaperone family. As to quaternary structure, component of the ClpX-ClpP complex. Forms a hexameric ring that, in the presence of ATP, binds to fourteen ClpP subunits assembled into a disk-like structure with a central cavity, resembling the structure of eukaryotic proteasomes.

Its function is as follows. ATP-dependent specificity component of the Clp protease. It directs the protease to specific substrates. Can perform chaperone functions in the absence of ClpP. This Borrelia duttonii (strain Ly) protein is ATP-dependent Clp protease ATP-binding subunit ClpX.